Reading from the N-terminus, the 364-residue chain is tRNA 2-selenouridine synthase (364 aa).

The Rhodanese domain occupies 14–137 (LLADTPLIDV…LRQTAIQATW (124 aa)). Residue C97 is the S-selanylcysteine intermediate of the active site.

This sequence belongs to the SelU family. As to quaternary structure, monomer.

The catalysed reaction is 5-methylaminomethyl-2-thiouridine(34) in tRNA + selenophosphate + (2E)-geranyl diphosphate + H2O + H(+) = 5-methylaminomethyl-2-selenouridine(34) in tRNA + (2E)-thiogeraniol + phosphate + diphosphate. The enzyme catalyses 5-methylaminomethyl-2-thiouridine(34) in tRNA + (2E)-geranyl diphosphate = 5-methylaminomethyl-S-(2E)-geranyl-thiouridine(34) in tRNA + diphosphate. It carries out the reaction 5-methylaminomethyl-S-(2E)-geranyl-thiouridine(34) in tRNA + selenophosphate + H(+) = 5-methylaminomethyl-2-(Se-phospho)selenouridine(34) in tRNA + (2E)-thiogeraniol. It catalyses the reaction 5-methylaminomethyl-2-(Se-phospho)selenouridine(34) in tRNA + H2O = 5-methylaminomethyl-2-selenouridine(34) in tRNA + phosphate. Functionally, involved in the post-transcriptional modification of the uridine at the wobble position (U34) of tRNA(Lys), tRNA(Glu) and tRNA(Gln). Catalyzes the conversion of 2-thiouridine (S2U-RNA) to 2-selenouridine (Se2U-RNA). Acts in a two-step process involving geranylation of 2-thiouridine (S2U) to S-geranyl-2-thiouridine (geS2U) and subsequent selenation of the latter derivative to 2-selenouridine (Se2U) in the tRNA chain. This Salmonella gallinarum (strain 287/91 / NCTC 13346) protein is tRNA 2-selenouridine synthase.